Here is a 441-residue protein sequence, read N- to C-terminus: MSNVTHQPKIGFVSLGCPKNLVDSERILTELRTEGYDVVPRYDDADMVIVNTCGFIDSAVQESLEAIGEALNENGKVIVTGCLGAKEDQIREVHPKVLEITGPHSYEQVLQHVHHYVPKPKHNPFLSLVPEQGVKLTPRHYAYLKISEGCNHRCTFCIIPSMRGDLVSRPIGDVLSEAKRLVDAGVKEILVISQDTSAYGVDVKHRTGFHNGEPVKTSMVSLCEQLSKLGVWTRLHYVYPYPHVDDVIPLMAEGKILPYLDIPLQHASPRILKLMKRPGSVDRQLARIKQWREICPELTLRSTFIVGFPGETEEDFQMLLDFLKEARLDRVGCFKYSPVEGAGANDLPAQVPEEVKEERWNRFMQLQQQISAERLQEKVGREILVIVDEVDEEGAIGRSMADAPEIDGAVYLNGETNVKPGDIVRVKVENADEYDLWGSRV.

Residues 8–118 (PKIGFVSLGC…VLQHVHHYVP (111 aa)) form the MTTase N-terminal domain. Cysteine 17, cysteine 53, cysteine 82, cysteine 150, cysteine 154, and cysteine 157 together coordinate [4Fe-4S] cluster. The Radical SAM core domain maps to 136 to 373 (LTPRHYAYLK…MQLQQQISAE (238 aa)). Positions 376-441 (QEKVGREILV…DEYDLWGSRV (66 aa)) constitute a TRAM domain.

This sequence belongs to the methylthiotransferase family. RimO subfamily. The cofactor is [4Fe-4S] cluster.

The protein localises to the cytoplasm. It catalyses the reaction L-aspartate(89)-[ribosomal protein uS12]-hydrogen + (sulfur carrier)-SH + AH2 + 2 S-adenosyl-L-methionine = 3-methylsulfanyl-L-aspartate(89)-[ribosomal protein uS12]-hydrogen + (sulfur carrier)-H + 5'-deoxyadenosine + L-methionine + A + S-adenosyl-L-homocysteine + 2 H(+). Catalyzes the methylthiolation of an aspartic acid residue of ribosomal protein uS12. This chain is Ribosomal protein uS12 methylthiotransferase RimO, found in Salmonella heidelberg (strain SL476).